The chain runs to 509 residues: Maturase K (509 aa).

It belongs to the intron maturase 2 family. MatK subfamily.

The protein resides in the plastid. It is found in the chloroplast. Usually encoded in the trnK tRNA gene intron. Probably assists in splicing its own and other chloroplast group II introns. The polypeptide is Maturase K (Solanum tuberosum (Potato)).